The primary structure comprises 86 residues: MKVSVLITLAVLGVMFVWTSAAELEERGSDQRDSPAWLKSMERIFQSEERECRKMFGGCSVDSDCCAHLGCKPTLKYCAWDGTFGK.

The first 21 residues, 1-21, serve as a signal peptide directing secretion; the sequence is MKVSVLITLAVLGVMFVWTSA. Positions 22–50 are excised as a propeptide; the sequence is AELEERGSDQRDSPAWLKSMERIFQSEER. 3 cysteine pairs are disulfide-bonded: Cys-52–Cys-66, Cys-59–Cys-71, and Cys-65–Cys-78. Phe-84 bears the Phenylalanine amide mark.

The protein belongs to the neurotoxin 10 (Hwtx-1) family. 28 (Jztx-11) subfamily. In terms of tissue distribution, expressed by the venom gland.

The protein resides in the secreted. Functionally, this toxin acts as a voltage-dependent gating-modifier. It inhibits the sodium conductance (IC(50)=124 nM) and slows the fast inactivation (EC(50)=1180 nM) of Nav1.5/SCN5A. It significantly shifts the activation to more depolarized voltages and decreases the deactivation of Nav1.5 currents upon extreme depolarization, but only slightly affects voltage-dependence of steady-state inactivation. In addition, this toxin causes an approximately five-fold decrease in the rate of recovery from inactivation and an approximately 1.9-fold reduction in the closed-state inactivation rate. This toxin integrates the functions of site 3 toxins (alpha-scorpion toxins) with site 4 toxins (beta-scorpion and spider toxins) by targeting multiple sites on Nav1.5. Also shows inhibition of voltage-gated potassium channels (5 uM completely inhibits Kv2.1/KCNB1, whereas 5 uM moderately inhibits Kv4.2/KCND2 Kv4.1/KCND1 channels). The sequence is that of Kappa-theraphotoxin-Cg1a 5 from Chilobrachys guangxiensis (Chinese earth tiger tarantula).